The primary structure comprises 242 residues: uncharacterized protein (242 aa).

The protein resides in the cytoplasm. It is found in the nucleus. This is an uncharacterized protein from Schizosaccharomyces pombe (strain 972 / ATCC 24843) (Fission yeast).